Consider the following 331-residue polypeptide: Beta-ketoacyl-[acyl-carrier-protein] synthase III (331 aa).

Residues Cys113 and His256 contribute to the active site. The ACP-binding stretch occupies residues 257–261; the sequence is QANKR. Asn286 is a catalytic residue.

The protein belongs to the thiolase-like superfamily. FabH family. In terms of assembly, homodimer.

It is found in the cytoplasm. The catalysed reaction is malonyl-[ACP] + acetyl-CoA + H(+) = 3-oxobutanoyl-[ACP] + CO2 + CoA. It functions in the pathway lipid metabolism; fatty acid biosynthesis. Functionally, catalyzes the condensation reaction of fatty acid synthesis by the addition to an acyl acceptor of two carbons from malonyl-ACP. Catalyzes the first condensation reaction which initiates fatty acid synthesis and may therefore play a role in governing the total rate of fatty acid production. Possesses both acetoacetyl-ACP synthase and acetyl transacylase activities. Its substrate specificity determines the biosynthesis of branched-chain and/or straight-chain of fatty acids. This Solibacter usitatus (strain Ellin6076) protein is Beta-ketoacyl-[acyl-carrier-protein] synthase III.